We begin with the raw amino-acid sequence, 339 residues long: DNA-directed RNA polymerase subunit alpha (339 aa).

Residues 1–235 (MVIQKNWQEL…DQLQVFVNFE (235 aa)) are alpha N-terminal domain (alpha-NTD). Residues 251–339 (FNPALLKKVD…DLAKRFEEHY (89 aa)) are alpha C-terminal domain (alpha-CTD).

It belongs to the RNA polymerase alpha chain family. Homodimer. The RNAP catalytic core consists of 2 alpha, 1 beta, 1 beta' and 1 omega subunit. When a sigma factor is associated with the core the holoenzyme is formed, which can initiate transcription.

It carries out the reaction RNA(n) + a ribonucleoside 5'-triphosphate = RNA(n+1) + diphosphate. DNA-dependent RNA polymerase catalyzes the transcription of DNA into RNA using the four ribonucleoside triphosphates as substrates. This is DNA-directed RNA polymerase subunit alpha from Methylorubrum extorquens (strain CM4 / NCIMB 13688) (Methylobacterium extorquens).